Here is a 237-residue protein sequence, read N- to C-terminus: Ribosomal RNA small subunit methyltransferase G (237 aa).

S-adenosyl-L-methionine contacts are provided by residues Gly78, Phe83, Ala129–Glu130, and Arg148. Residues Lys218–Leu237 are disordered.

The protein belongs to the methyltransferase superfamily. RNA methyltransferase RsmG family.

It localises to the cytoplasm. Functionally, specifically methylates the N7 position of a guanine in 16S rRNA. The protein is Ribosomal RNA small subunit methyltransferase G of Streptococcus suis (strain 98HAH33).